A 335-amino-acid chain; its full sequence is Glyceraldehyde-3-phosphate dehydrogenase (335 aa).

Residues 13-14 and Gly-111 contribute to the NAD(+) site; that span reads TI. 140 to 142 is a binding site for D-glyceraldehyde 3-phosphate; the sequence is SCN. The active-site Nucleophile is Cys-141. Arg-169 contributes to the NAD(+) binding site. 195-196 is a binding site for D-glyceraldehyde 3-phosphate; that stretch reads HG. An NAD(+)-binding site is contributed by Gln-300.

Belongs to the glyceraldehyde-3-phosphate dehydrogenase family. As to quaternary structure, homotetramer.

It localises to the cytoplasm. The enzyme catalyses D-glyceraldehyde 3-phosphate + phosphate + NADP(+) = (2R)-3-phospho-glyceroyl phosphate + NADPH + H(+). The catalysed reaction is D-glyceraldehyde 3-phosphate + phosphate + NAD(+) = (2R)-3-phospho-glyceroyl phosphate + NADH + H(+). It participates in carbohydrate degradation; glycolysis; pyruvate from D-glyceraldehyde 3-phosphate: step 1/5. The protein is Glyceraldehyde-3-phosphate dehydrogenase of Methanococcoides burtonii (strain DSM 6242 / NBRC 107633 / OCM 468 / ACE-M).